Consider the following 84-residue polypeptide: Alpha-mammal toxin Ts2 (84 aa).

Residues 1-20 form the signal peptide; the sequence is MKGFLLFISILMMIGTIVVG. Residues 21–83 form the LCN-type CS-alpha/beta domain; that stretch reads KEGYAMDHEG…VWDYATNKCG (63 aa). 4 cysteine pairs are disulfide-bonded: Cys-31–Cys-82, Cys-35–Cys-58, Cys-43–Cys-63, and Cys-47–Cys-65. Cys-82 carries the post-translational modification Cysteine amide.

This sequence belongs to the long (4 C-C) scorpion toxin superfamily. Sodium channel inhibitor family. Beta subfamily. As to expression, expressed by the venom gland.

It is found in the secreted. In terms of biological role, alpha toxins bind voltage-independently at site-3 of sodium channels (Nav) and inhibit the inactivation of the activated channels, thereby blocking neuronal transmission. This toxin acts on Nav1.2/SCN2A, Nav1.3/SCN3A, Nav1.5/SCN5A, Nav1.6/SCN8A and Nav1.7/SCN9A voltage-gated sodium channels, with the highest affinity for Nav1.3/SCN3A, followed by Nav1.6/SCN8A and Nav1.7/SCN9A which are affected almost equally. Interestingly, shows a significant shift of the voltage dependence of activation for Nav1.3/SCN3A that is characteristic of beta-toxins. In addition, in presence of LPS, this toxin inhibits the release of NO, IL-6 and TNF-alpha in J774.1 cells. Further, in the absence of LPS, it stimulates the production of the anti-inflammatory cytokine IL-10. This toxin is active on mammals. This chain is Alpha-mammal toxin Ts2, found in Tityus serrulatus (Brazilian scorpion).